We begin with the raw amino-acid sequence, 84 residues long: LYR motif-containing protein 4B (84 aa).

It belongs to the complex I LYR family.

The chain is LYR motif-containing protein 4B (lyrm4b) from Salmo salar (Atlantic salmon).